The following is a 336-amino-acid chain: Large ribosomal subunit protein mL39 (336 aa).

One can recognise a TGS domain in the interval 60–126 (EKIEVKHVGK…TKSCEIKFLT (67 aa)). Position 123 is an N6-acetyllysine (K123).

The protein belongs to the mitochondrion-specific ribosomal protein mL39 family. Component of the mitochondrial ribosome large subunit (39S) which comprises a 16S rRNA and about 50 distinct proteins.

The protein resides in the mitochondrion. This Mus musculus (Mouse) protein is Large ribosomal subunit protein mL39 (Mrpl39).